The primary structure comprises 159 residues: Lipoprotein signal peptidase (159 aa).

A run of 2 helical transmembrane segments spans residues Ser64–Val84 and Pro89–Ile109. Catalysis depends on residues Asp119 and Asp135. The helical transmembrane segment at Ile130–Trp150 threads the bilayer.

Belongs to the peptidase A8 family.

Its subcellular location is the cell inner membrane. It carries out the reaction Release of signal peptides from bacterial membrane prolipoproteins. Hydrolyzes -Xaa-Yaa-Zaa-|-(S,diacylglyceryl)Cys-, in which Xaa is hydrophobic (preferably Leu), and Yaa (Ala or Ser) and Zaa (Gly or Ala) have small, neutral side chains.. It functions in the pathway protein modification; lipoprotein biosynthesis (signal peptide cleavage). Its function is as follows. This protein specifically catalyzes the removal of signal peptides from prolipoproteins. This chain is Lipoprotein signal peptidase, found in Parasynechococcus marenigrum (strain WH8102).